Consider the following 277-residue polypeptide: NH(3)-dependent NAD(+) synthetase (277 aa).

Residue 46 to 53 (GISGGQDS) coordinates ATP. Aspartate 52 lines the Mg(2+) pocket. Arginine 141 lines the deamido-NAD(+) pocket. An ATP-binding site is contributed by threonine 161. A Mg(2+)-binding site is contributed by glutamate 166. Deamido-NAD(+) is bound by residues lysine 174 and aspartate 181. Lysine 190 and threonine 212 together coordinate ATP. A deamido-NAD(+)-binding site is contributed by 262–263 (HK).

The protein belongs to the NAD synthetase family. In terms of assembly, homodimer.

The enzyme catalyses deamido-NAD(+) + NH4(+) + ATP = AMP + diphosphate + NAD(+) + H(+). It functions in the pathway cofactor biosynthesis; NAD(+) biosynthesis; NAD(+) from deamido-NAD(+) (ammonia route): step 1/1. In terms of biological role, catalyzes the ATP-dependent amidation of deamido-NAD to form NAD. Uses ammonia as a nitrogen source. The sequence is that of NH(3)-dependent NAD(+) synthetase from Corynebacterium efficiens (strain DSM 44549 / YS-314 / AJ 12310 / JCM 11189 / NBRC 100395).